The chain runs to 414 residues: Zinc metalloproteinase-disintegrin-like batroxstatin-3 (414 aa).

Residues Asn-7 and Asn-70 are each glycosylated (N-linked (GlcNAc...) asparagine). One can recognise a Peptidase M12B domain in the interval Lys-10 to Pro-204. Disulfide bonds link Cys-121–Cys-199, Cys-161–Cys-183, and Cys-163–Cys-168. Residue His-146 coordinates Zn(2+). The active site involves Glu-147. Residues His-150 and His-156 each coordinate Zn(2+). One can recognise a Disintegrin domain in the interval Pro-212–Asn-298. Ca(2+) contacts are provided by Val-214, Asn-217, Glu-221, Glu-224, and Asp-227. 14 cysteine pairs are disulfide-bonded: Cys-215/Cys-244, Cys-226/Cys-239, Cys-228/Cys-234, Cys-238/Cys-261, Cys-252/Cys-258, Cys-257/Cys-283, Cys-270/Cys-290, Cys-277/Cys-309, Cys-302/Cys-314, Cys-321/Cys-371, Cys-336/Cys-381, Cys-349/Cys-359, Cys-366/Cys-403, and Cys-397/Cys-408. The D/ECD-tripeptide motif lies at Glu-276 to Asp-278. Residues Asp-278, Glu-281, Asp-293, and Arg-294 each coordinate Ca(2+).

This sequence belongs to the venom metalloproteinase (M12B) family. P-III subfamily. P-IIIa sub-subfamily. In terms of assembly, monomer. Zn(2+) serves as cofactor. In terms of tissue distribution, expressed by the venom gland.

It localises to the secreted. In terms of biological role, snake venom zinc metalloprotease that induces apoptosis in vascular endothelial cells (VEC), without degrading the extracellular matrix (it cannot cleave collagen) or inhibiting adhesion of VEC. Has also fibrinogenolytic and hemorrhagic activities. The sequence is that of Zinc metalloproteinase-disintegrin-like batroxstatin-3 from Bothrops atrox (Barba amarilla).